Here is a 643-residue protein sequence, read N- to C-terminus: Fructose-1,6-bisphosphatase class 3 (643 aa).

Belongs to the FBPase class 3 family. The cofactor is Mn(2+).

It catalyses the reaction beta-D-fructose 1,6-bisphosphate + H2O = beta-D-fructose 6-phosphate + phosphate. It functions in the pathway carbohydrate biosynthesis; gluconeogenesis. The chain is Fructose-1,6-bisphosphatase class 3 from Lacticaseibacillus paracasei (strain ATCC 334 / BCRC 17002 / CCUG 31169 / CIP 107868 / KCTC 3260 / NRRL B-441) (Lactobacillus paracasei).